Reading from the N-terminus, the 215-residue chain is FMN-dependent NADH:quinone oxidoreductase (215 aa).

17 to 19 serves as a coordination point for FMN; that stretch reads SAS.

The protein belongs to the azoreductase type 1 family. In terms of assembly, homodimer. The cofactor is FMN.

It carries out the reaction 2 a quinone + NADH + H(+) = 2 a 1,4-benzosemiquinone + NAD(+). The enzyme catalyses N,N-dimethyl-1,4-phenylenediamine + anthranilate + 2 NAD(+) = 2-(4-dimethylaminophenyl)diazenylbenzoate + 2 NADH + 2 H(+). In terms of biological role, quinone reductase that provides resistance to thiol-specific stress caused by electrophilic quinones. Functionally, also exhibits azoreductase activity. Catalyzes the reductive cleavage of the azo bond in aromatic azo compounds to the corresponding amines. The protein is FMN-dependent NADH:quinone oxidoreductase of Clostridium botulinum (strain Eklund 17B / Type B).